The sequence spans 210 residues: MPKVAILIYSVDDIIATLAENEKKGIEIAGGEAEIFQVPDVSYKTEYATEEGKEAAKVAKTNADFSYKILTRETLVEYDYYLFGIPTKFGNFPAEWKSFWDSNTGGLWAKGSLHGKIAGLFVSGAISGKGDTEMCIMNAMSTLVHHGVIYVPLGYKNAYKELTDVEDVNGSCAWGAGCVSGIDGGRPPSLSELRVHQLQGKAFYDRIKDL.

A Flavodoxin-like domain is found at 4–203 (VAILIYSVDD…RVHQLQGKAF (200 aa)).

The protein belongs to the WrbA family.

The protein resides in the cytoplasm. It localises to the membrane raft. The sequence is that of Protein RFS1 (RFS1) from Saccharomyces cerevisiae (strain ATCC 204508 / S288c) (Baker's yeast).